The primary structure comprises 197 residues: dTTP/UTP pyrophosphatase (197 aa).

The active-site Proton acceptor is the aspartate 70.

The protein belongs to the Maf family. YhdE subfamily. A divalent metal cation serves as cofactor.

It is found in the cytoplasm. The enzyme catalyses dTTP + H2O = dTMP + diphosphate + H(+). It carries out the reaction UTP + H2O = UMP + diphosphate + H(+). Its function is as follows. Nucleoside triphosphate pyrophosphatase that hydrolyzes dTTP and UTP. May have a dual role in cell division arrest and in preventing the incorporation of modified nucleotides into cellular nucleic acids. In Escherichia coli O157:H7, this protein is dTTP/UTP pyrophosphatase (yhdE).